The primary structure comprises 96 residues: Class I hydrophobin 2 (96 aa).

An N-terminal signal peptide occupies residues 1-15 (MFKALIVALAAVAAA). Intrachain disulfides connect Cys28–Cys77, Cys34–Cys71, Cys35–Cys55, and Cys78–Cys91.

The protein belongs to the fungal hydrophobin family.

It localises to the secreted. Its subcellular location is the cell wall. Its function is as follows. Aerial growth, conidiation, and dispersal of filamentous fungi in the environment rely upon a capability of their secreting small amphipathic proteins called hydrophobins (HPBs) with low sequence identity. Class I can self-assemble into an outermost layer of rodlet bundles on aerial cell surfaces, conferring cellular hydrophobicity that supports fungal growth, development and dispersal; whereas Class II form highly ordered films at water-air interfaces through intermolecular interactions but contribute nothing to the rodlet structure. Hyd2 plays a neglectable role in hyphal growth and asexual development and does not seem involved in cellular hydrophobicity, conidial adhesion, stress tolerance nor insect pathogenicity. This is Class I hydrophobin 2 from Metarhizium robertsii (strain ARSEF 23 / ATCC MYA-3075) (Metarhizium anisopliae (strain ARSEF 23)).